Consider the following 137-residue polypeptide: Small ribosomal subunit protein bS16m (137 aa).

The transit peptide at M1 to I34 directs the protein to the mitochondrion. Position 130 is a phosphothreonine (T130).

The protein belongs to the bacterial ribosomal protein bS16 family. In terms of assembly, component of the mitochondrial ribosome small subunit (28S) which comprises a 12S rRNA and about 30 distinct proteins.

It is found in the mitochondrion. The polypeptide is Small ribosomal subunit protein bS16m (MRPS16) (Pongo abelii (Sumatran orangutan)).